A 316-amino-acid chain; its full sequence is Very-long-chain 3-oxooacyl-coA reductase let-767 (316 aa).

Residues 52–80 (ITGATDGIGKAYAFELARRGFNVFIVSRT) and Asp-106 contribute to the NADP(+) site. Substrate is bound at residue Ser-189. The active-site Proton acceptor is the Tyr-202. Lys-206 contributes to the NADP(+) binding site.

It belongs to the short-chain dehydrogenases/reductases (SDR) family. 17-beta-HSD 3 subfamily.

It catalyses the reaction a very-long-chain (3R)-3-hydroxyacyl-CoA + NADP(+) = a very-long-chain 3-oxoacyl-CoA + NADPH + H(+). The protein operates within lipid metabolism; fatty acid biosynthesis. In terms of biological role, required for branched chain fatty acid synthesis. Catalyzes the reduction of the 3-ketoacyl-CoA intermediate that is formed in each cycle of fatty acid elongation. Very long-chain fatty acids (VLCFAs) serve as precursors for ceramide and sphingolipids. May also be required for sterol hormone production. The protein is Very-long-chain 3-oxooacyl-coA reductase let-767 of Caenorhabditis briggsae.